The chain runs to 295 residues: MNILEKKAQLSYWQRIKIAFQYVMPQLYLTRLAGWFAKQQWGAVTHFVIKLFAKKYHVDMSEAAKPNFSDYASFNEFFIRPLADNARPINQNPTALCLPADGRISQLGHIEQDLLLQAKGHYFSLNDLLAGDEALAHHFKDGEFATTYLSPRDYHRVHMPCDATLCKMIYVPGDLFSVNPFLAEHVPNLFARNERVICVFDTEFGKMVQILVGATITASMSTVWAGVINPPRPEKITTWTYEGASAVKLTKGQEMGAFQLGSTVINLFEKDRVQLASHLQVDSPVRMGEILAHQK.

Active-site charge relay system; for autoendoproteolytic cleavage activity residues include Asp-101, His-158, and Ser-262. Ser-262 functions as the Schiff-base intermediate with substrate; via pyruvic acid; for decarboxylase activity in the catalytic mechanism. A Pyruvic acid (Ser); by autocatalysis modification is found at Ser-262.

Belongs to the phosphatidylserine decarboxylase family. PSD-B subfamily. Prokaryotic type I sub-subfamily. Heterodimer of a large membrane-associated beta subunit and a small pyruvoyl-containing alpha subunit. It depends on pyruvate as a cofactor. Post-translationally, is synthesized initially as an inactive proenzyme. Formation of the active enzyme involves a self-maturation process in which the active site pyruvoyl group is generated from an internal serine residue via an autocatalytic post-translational modification. Two non-identical subunits are generated from the proenzyme in this reaction, and the pyruvate is formed at the N-terminus of the alpha chain, which is derived from the carboxyl end of the proenzyme. The autoendoproteolytic cleavage occurs by a canonical serine protease mechanism, in which the side chain hydroxyl group of the serine supplies its oxygen atom to form the C-terminus of the beta chain, while the remainder of the serine residue undergoes an oxidative deamination to produce ammonia and the pyruvoyl prosthetic group on the alpha chain. During this reaction, the Ser that is part of the protease active site of the proenzyme becomes the pyruvoyl prosthetic group, which constitutes an essential element of the active site of the mature decarboxylase.

The protein resides in the cell membrane. The catalysed reaction is a 1,2-diacyl-sn-glycero-3-phospho-L-serine + H(+) = a 1,2-diacyl-sn-glycero-3-phosphoethanolamine + CO2. It functions in the pathway phospholipid metabolism; phosphatidylethanolamine biosynthesis; phosphatidylethanolamine from CDP-diacylglycerol: step 2/2. In terms of biological role, catalyzes the formation of phosphatidylethanolamine (PtdEtn) from phosphatidylserine (PtdSer). The sequence is that of Phosphatidylserine decarboxylase proenzyme from Pasteurella multocida (strain Pm70).